The sequence spans 863 residues: Leucine--tRNA ligase (863 aa).

A 'HIGH' region motif is present at residues 40-51 (PYPSGAGLHVGH). The short motif at 635 to 639 (KMSKS) is the 'KMSKS' region element. Lys-638 contributes to the ATP binding site.

This sequence belongs to the class-I aminoacyl-tRNA synthetase family.

Its subcellular location is the cytoplasm. The enzyme catalyses tRNA(Leu) + L-leucine + ATP = L-leucyl-tRNA(Leu) + AMP + diphosphate. The protein is Leucine--tRNA ligase of Leptospira interrogans serogroup Icterohaemorrhagiae serovar copenhageni (strain Fiocruz L1-130).